A 247-amino-acid chain; its full sequence is Protein-L-isoaspartate O-methyltransferase 2 (247 aa).

S97 is a catalytic residue.

It belongs to the methyltransferase superfamily. L-isoaspartyl/D-aspartyl protein methyltransferase family.

The protein localises to the cytoplasm. It catalyses the reaction [protein]-L-isoaspartate + S-adenosyl-L-methionine = [protein]-L-isoaspartate alpha-methyl ester + S-adenosyl-L-homocysteine. In terms of biological role, catalyzes the methyl esterification of L-isoaspartyl residues in peptides and proteins that result from spontaneous decomposition of normal L-aspartyl and L-asparaginyl residues. It plays a role in the repair and/or degradation of damaged proteins. This chain is Protein-L-isoaspartate O-methyltransferase 2, found in Syntrophobacter fumaroxidans (strain DSM 10017 / MPOB).